A 309-amino-acid chain; its full sequence is HPr kinase/phosphorylase (309 aa).

Active-site residues include His-138 and Lys-159. Residue 153-160 (GDSGIGKS) coordinates ATP. A Mg(2+)-binding site is contributed by Ser-160. Asp-177 functions as the Proton acceptor; for phosphorylation activity. Proton donor; for dephosphorylation activity in the catalytic mechanism. The segment at 201 to 210 (LEIRGVGIID) is important for the catalytic mechanism of both phosphorylation and dephosphorylation. Mg(2+) is bound at residue Glu-202. Arg-243 is an active-site residue. Residues 264-269 (PVKTGR) form an important for the catalytic mechanism of dephosphorylation region.

Belongs to the HPrK/P family. In terms of assembly, homohexamer. Mg(2+) is required as a cofactor.

The enzyme catalyses [HPr protein]-L-serine + ATP = [HPr protein]-O-phospho-L-serine + ADP + H(+). It carries out the reaction [HPr protein]-O-phospho-L-serine + phosphate + H(+) = [HPr protein]-L-serine + diphosphate. Catalyzes the ATP- as well as the pyrophosphate-dependent phosphorylation of a specific serine residue in HPr, a phosphocarrier protein of the phosphoenolpyruvate-dependent sugar phosphotransferase system (PTS). HprK/P also catalyzes the pyrophosphate-producing, inorganic phosphate-dependent dephosphorylation (phosphorolysis) of seryl-phosphorylated HPr (P-Ser-HPr). The two antagonistic activities of HprK/P are regulated by several intracellular metabolites, which change their concentration in response to the absence or presence of rapidly metabolisable carbon sources (glucose, fructose, etc.) in the growth medium. Therefore, by controlling the phosphorylation state of HPr, HPrK/P is a sensor enzyme that plays a major role in the regulation of carbon metabolism and sugar transport: it mediates carbon catabolite repression (CCR), and regulates PTS-catalyzed carbohydrate uptake and inducer exclusion. This chain is HPr kinase/phosphorylase, found in Streptococcus thermophilus (strain CNRZ 1066).